Here is a 91-residue protein sequence, read N- to C-terminus: ATP synthase subunit c 2 (91 aa).

2 helical membrane passes run 4–24 (FSMCVLGAAIGMAIGTLGTGI) and 53–73 (IGLAMIESLAIYALVICLIIL).

The protein belongs to the ATPase C chain family. F-type ATPases have 2 components, F(1) - the catalytic core - and F(0) - the membrane proton channel. F(1) has five subunits: alpha(3), beta(3), gamma(1), delta(1), epsilon(1). F(0) has three main subunits: a(1), b(2) and c(10-14). The alpha and beta chains form an alternating ring which encloses part of the gamma chain. F(1) is attached to F(0) by a central stalk formed by the gamma and epsilon chains, while a peripheral stalk is formed by the delta and b chains.

The protein resides in the cell inner membrane. Its function is as follows. F(1)F(0) ATP synthase produces ATP from ADP in the presence of a proton or sodium gradient. F-type ATPases consist of two structural domains, F(1) containing the extramembraneous catalytic core and F(0) containing the membrane proton channel, linked together by a central stalk and a peripheral stalk. During catalysis, ATP synthesis in the catalytic domain of F(1) is coupled via a rotary mechanism of the central stalk subunits to proton translocation. In terms of biological role, key component of the F(0) channel; it plays a direct role in translocation across the membrane. A homomeric c-ring of between 10-14 subunits forms the central stalk rotor element with the F(1) delta and epsilon subunits. This is ATP synthase subunit c 2 from Pelobacter propionicus (strain DSM 2379 / NBRC 103807 / OttBd1).